A 241-amino-acid chain; its full sequence is MRILLLEGITDVAFFIPILKKLYGFSEISCDGIIRAEKMGDISKPICLENEDVKLIVFHSGGKSKQKHALTAMLTAIKMGYLSNIKILGIARDIDQEHDVKNWTKSIIKNAGFEVKEGDKFLIIEDLNLKIAVLGIANYDEDDFNIPSFELKRELEAVITDMAKEISIIEKFKNSLESLSNDAERRLKPKDITHVLAIAKNFDGDSMSGLYRKFIEEQINNKNKVNFLLTLICILPCLTIF.

This is an uncharacterized protein from Methanocaldococcus jannaschii (strain ATCC 43067 / DSM 2661 / JAL-1 / JCM 10045 / NBRC 100440) (Methanococcus jannaschii).